The following is a 189-amino-acid chain: Glycerol-3-phosphate acyltransferase (189 aa).

5 consecutive transmembrane segments (helical) span residues 1 to 21 (MFWL…AILL), 51 to 71 (LAVL…LIAH), 77 to 97 (LQQQ…PLYF), 111 to 131 (MLLG…ALTF), and 151 to 171 (LLAW…LLIV).

The protein belongs to the PlsY family. Probably interacts with PlsX.

It localises to the cell inner membrane. The enzyme catalyses an acyl phosphate + sn-glycerol 3-phosphate = a 1-acyl-sn-glycero-3-phosphate + phosphate. It participates in lipid metabolism; phospholipid metabolism. Catalyzes the transfer of an acyl group from acyl-phosphate (acyl-PO(4)) to glycerol-3-phosphate (G3P) to form lysophosphatidic acid (LPA). This enzyme utilizes acyl-phosphate as fatty acyl donor, but not acyl-CoA or acyl-ACP. In Pseudomonas fluorescens (strain ATCC BAA-477 / NRRL B-23932 / Pf-5), this protein is Glycerol-3-phosphate acyltransferase.